The sequence spans 358 residues: Photosystem II protein D1 1 (358 aa).

The next 3 helical transmembrane spans lie at 28–45, 117–132, and 141–155; these read YVGWFGVLMIPCLLAATI, HFLIGISAYMGRQWEL, and WICVAYSAPLSAAFA. H117 contributes to the chlorophyll a binding site. Y125 provides a ligand contact to pheophytin a. [CaMn4O5] cluster is bound by residues D169 and E188. Residues 196-217 form a helical membrane-spanning segment; it reads FHMLGVAGVFGGSLFSAMHGSL. A chlorophyll a-binding site is contributed by H197. A quinone is bound by residues H214 and 263–264; that span reads SF. H214 is a binding site for Fe cation. H271 contacts Fe cation. Residues 273–287 traverse the membrane as a helical segment; it reads FLGAWPVIGIWFTSM. Positions 331, 332, 341, and 343 each coordinate [CaMn4O5] cluster. Positions 344 to 358 are excised as a propeptide; it reads AAESTPVALQAPAIG.

Belongs to the reaction center PufL/M/PsbA/D family. In terms of assembly, PSII is composed of 1 copy each of membrane proteins PsbA, PsbB, PsbC, PsbD, PsbE, PsbF, PsbH, PsbI, PsbJ, PsbK, PsbL, PsbM, PsbT, PsbX, PsbY, PsbZ, Psb30/Ycf12, peripheral proteins PsbO, CyanoQ (PsbQ), PsbU, PsbV and a large number of cofactors. It forms dimeric complexes. The D1/D2 heterodimer binds P680, chlorophylls that are the primary electron donor of PSII, and subsequent electron acceptors. It shares a non-heme iron and each subunit binds pheophytin, quinone, additional chlorophylls, carotenoids and lipids. D1 provides most of the ligands for the Mn4-Ca-O5 cluster of the oxygen-evolving complex (OEC). There is also a Cl(-1) ion associated with D1 and D2, which is required for oxygen evolution. The PSII complex binds additional chlorophylls, carotenoids and specific lipids. is required as a cofactor. In terms of processing, tyr-160 forms a radical intermediate that is referred to as redox-active TyrZ, YZ or Y-Z. C-terminally processed by CtpA; processing is essential to allow assembly of the oxygen-evolving complex and thus photosynthetic growth.

The protein resides in the cellular thylakoid membrane. The enzyme catalyses 2 a plastoquinone + 4 hnu + 2 H2O = 2 a plastoquinol + O2. Functionally, photosystem II (PSII) is a light-driven water:plastoquinone oxidoreductase that uses light energy to abstract electrons from H(2)O, generating O(2) and a proton gradient subsequently used for ATP formation. It consists of a core antenna complex that captures photons, and an electron transfer chain that converts photonic excitation into a charge separation. The D1/D2 (PsbA/PsbD) reaction center heterodimer binds P680, the primary electron donor of PSII as well as several subsequent electron acceptors. This is Photosystem II protein D1 1 from Synechococcus sp. (strain CC9902).